The chain runs to 254 residues: 3-oxo-5-alpha-steroid 4-dehydrogenase 2 (254 aa).

4 helical membrane-spanning segments follow: residues 8 to 28, 72 to 92, 146 to 166, and 206 to 226; these read SPVL…LYVA, PLSL…LHYF, FSLG…SDYI, and LATW…FLGL.

This sequence belongs to the steroid 5-alpha reductase family. As to expression, expressed in high levels in the prostate and many other androgen-sensitive tissues.

It is found in the microsome membrane. It localises to the endoplasmic reticulum membrane. It carries out the reaction a 3-oxo-5alpha-steroid + NADP(+) = a 3-oxo-Delta(4)-steroid + NADPH + H(+). It catalyses the reaction 17beta-hydroxy-5alpha-androstan-3-one + NADP(+) = testosterone + NADPH + H(+). The catalysed reaction is 5alpha-pregnane-3,20-dione + NADP(+) = progesterone + NADPH + H(+). In terms of biological role, converts testosterone (T) into 5-alpha-dihydrotestosterone (DHT) and progesterone or corticosterone into their corresponding 5-alpha-3-oxosteroids. It plays a central role in sexual differentiation and androgen physiology. This is 3-oxo-5-alpha-steroid 4-dehydrogenase 2 (SRD5A2) from Homo sapiens (Human).